A 143-amino-acid polypeptide reads, in one-letter code: Hemoglobin subunit alpha (143 aa).

Residues 2-143 form the Globin domain; that stretch reads RFSQDDEVLI…IVHVLISLYR (142 aa). Residue His60 coordinates O2. His89 contacts heme b.

The protein belongs to the globin family. In terms of assembly, heterotetramer of two alpha chains and two beta chains. Red blood cells.

In terms of biological role, involved in oxygen transport from the lung to the various peripheral tissues. The sequence is that of Hemoglobin subunit alpha (HBA) from Lepidosiren paradoxus (South American lungfish).